We begin with the raw amino-acid sequence, 1972 residues long: Myosin-11 (1972 aa).

Serine 8, serine 23, and serine 40 each carry phosphoserine. The 51-residue stretch at valine 31–proline 81 folds into the Myosin N-terminal SH3-like domain. Residues serine 85 to aspartate 783 form the Myosin motor domain. The residue at position 129 (lysine 129) is an N6,N6,N6-trimethyllysine. Glycine 178–threonine 185 provides a ligand contact to ATP. Actin-binding regions lie at residues leucine 661 to histidine 683 and arginine 762 to alanine 776. Residues isoleucine 786–alanine 815 enclose the IQ domain. Residues leucine 844–alanine 1934 adopt a coiled-coil conformation. Threonine 1177 carries the post-translational modification Phosphothreonine. 2 positions are modified to phosphoserine: serine 1684 and serine 1722. A compositionally biased stretch (polar residues) spans asparagine 1771–glutamine 1788. 2 disordered regions span residues asparagine 1771–leucine 1797 and glutamine 1867–glutamate 1972. Over residues glutamine 1867–asparagine 1876 the composition is skewed to basic and acidic residues. Residues serine 1935 to glutamate 1972 are C-terminal. Residue threonine 1951 is modified to Phosphothreonine. Residues serine 1954 and serine 1971 each carry the phosphoserine modification.

This sequence belongs to the TRAFAC class myosin-kinesin ATPase superfamily. Myosin family. As to quaternary structure, muscle myosin is a hexameric protein that consists of 2 heavy chain subunits (MHC), 2 alkali light chain subunits (MLC) and 2 regulatory light chain subunits (MLC-2).

The protein localises to the melanosome. It is found in the cytoplasm. Its subcellular location is the myofibril. In terms of biological role, muscle contraction. The chain is Myosin-11 (Myh11) from Mus musculus (Mouse).